The primary structure comprises 318 residues: Tyrosine recombinase XerC (318 aa).

Positions Pro-17–Glu-108 constitute a Core-binding (CB) domain. The region spanning Ser-129–Asp-312 is the Tyr recombinase domain. Active-site residues include Arg-172, Lys-196, His-264, Arg-267, and His-290. Residue Tyr-299 is the O-(3'-phospho-DNA)-tyrosine intermediate of the active site.

The protein belongs to the 'phage' integrase family. XerC subfamily. As to quaternary structure, forms a cyclic heterotetrameric complex composed of two molecules of XerC and two molecules of XerD.

It is found in the cytoplasm. Functionally, site-specific tyrosine recombinase, which acts by catalyzing the cutting and rejoining of the recombining DNA molecules. The XerC-XerD complex is essential to convert dimers of the bacterial chromosome into monomers to permit their segregation at cell division. It also contributes to the segregational stability of plasmids. In Rhizobium meliloti (strain 1021) (Ensifer meliloti), this protein is Tyrosine recombinase XerC.